The primary structure comprises 143 residues: Small ribosomal subunit protein uS12 (143 aa).

A compositionally biased stretch (basic residues) spans 1–19 (MGKPKGIRAARKLKTHRQA). Positions 1–21 (MGKPKGIRAARKLKTHRQAQR) are disordered. Residue P62 is modified to Hydroxyproline.

Belongs to the universal ribosomal protein uS12 family. Component of the 40S small ribosomal subunit.

The protein localises to the cytoplasm. The protein resides in the cytosol. Its subcellular location is the rough endoplasmic reticulum. The chain is Small ribosomal subunit protein uS12 (rps-23) from Brugia malayi (Filarial nematode worm).